A 431-amino-acid polypeptide reads, in one-letter code: 5-methylthioadenosine/S-adenosylhomocysteine deaminase (431 aa).

Zn(2+) is bound by residues histidine 63 and histidine 65. Substrate-binding residues include glutamate 92, arginine 144, and histidine 184. Histidine 211 is a Zn(2+) binding site. Residues glutamate 214 and aspartate 299 each coordinate substrate. Residue aspartate 299 coordinates Zn(2+).

Belongs to the metallo-dependent hydrolases superfamily. MTA/SAH deaminase family. Zn(2+) is required as a cofactor.

It carries out the reaction S-adenosyl-L-homocysteine + H2O + H(+) = S-inosyl-L-homocysteine + NH4(+). The catalysed reaction is S-methyl-5'-thioadenosine + H2O + H(+) = S-methyl-5'-thioinosine + NH4(+). Catalyzes the deamination of 5-methylthioadenosine and S-adenosyl-L-homocysteine into 5-methylthioinosine and S-inosyl-L-homocysteine, respectively. Is also able to deaminate adenosine. The sequence is that of 5-methylthioadenosine/S-adenosylhomocysteine deaminase from Thermoanaerobacter pseudethanolicus (strain ATCC 33223 / 39E) (Clostridium thermohydrosulfuricum).